We begin with the raw amino-acid sequence, 232 residues long: 7-cyano-7-deazaguanine synthase (232 aa).

8 to 18 (FSGGQDSTTCL) contacts ATP. C189, C198, C201, and C204 together coordinate Zn(2+).

Belongs to the QueC family. The cofactor is Zn(2+).

The catalysed reaction is 7-carboxy-7-deazaguanine + NH4(+) + ATP = 7-cyano-7-deazaguanine + ADP + phosphate + H2O + H(+). It participates in purine metabolism; 7-cyano-7-deazaguanine biosynthesis. In terms of biological role, catalyzes the ATP-dependent conversion of 7-carboxy-7-deazaguanine (CDG) to 7-cyano-7-deazaguanine (preQ(0)). The chain is 7-cyano-7-deazaguanine synthase from Photorhabdus laumondii subsp. laumondii (strain DSM 15139 / CIP 105565 / TT01) (Photorhabdus luminescens subsp. laumondii).